The chain runs to 581 residues: Arginine--tRNA ligase (581 aa).

Positions 126–136 match the 'HIGH' region motif; sequence PNLAKEMHVGH.

Belongs to the class-I aminoacyl-tRNA synthetase family. As to quaternary structure, monomer.

It is found in the cytoplasm. It catalyses the reaction tRNA(Arg) + L-arginine + ATP = L-arginyl-tRNA(Arg) + AMP + diphosphate. The chain is Arginine--tRNA ligase from Shewanella loihica (strain ATCC BAA-1088 / PV-4).